A 426-amino-acid polypeptide reads, in one-letter code: tRNA(Ile)-lysidine synthase (426 aa).

Position 27–32 (27–32 (SGGADS)) interacts with ATP.

This sequence belongs to the tRNA(Ile)-lysidine synthase family.

It is found in the cytoplasm. The catalysed reaction is cytidine(34) in tRNA(Ile2) + L-lysine + ATP = lysidine(34) in tRNA(Ile2) + AMP + diphosphate + H(+). In terms of biological role, ligates lysine onto the cytidine present at position 34 of the AUA codon-specific tRNA(Ile) that contains the anticodon CAU, in an ATP-dependent manner. Cytidine is converted to lysidine, thus changing the amino acid specificity of the tRNA from methionine to isoleucine. In Bacteroides thetaiotaomicron (strain ATCC 29148 / DSM 2079 / JCM 5827 / CCUG 10774 / NCTC 10582 / VPI-5482 / E50), this protein is tRNA(Ile)-lysidine synthase.